The primary structure comprises 138 residues: Phosphoribosyl-AMP cyclohydrolase (138 aa).

Asp84 contributes to the Mg(2+) binding site. Residue Cys85 coordinates Zn(2+). Positions 86 and 88 each coordinate Mg(2+). Cys102 and Cys109 together coordinate Zn(2+).

It belongs to the PRA-CH family. In terms of assembly, homodimer. Requires Mg(2+) as cofactor. It depends on Zn(2+) as a cofactor.

Its subcellular location is the cytoplasm. It catalyses the reaction 1-(5-phospho-beta-D-ribosyl)-5'-AMP + H2O = 1-(5-phospho-beta-D-ribosyl)-5-[(5-phospho-beta-D-ribosylamino)methylideneamino]imidazole-4-carboxamide. Its pathway is amino-acid biosynthesis; L-histidine biosynthesis; L-histidine from 5-phospho-alpha-D-ribose 1-diphosphate: step 3/9. Its function is as follows. Catalyzes the hydrolysis of the adenine ring of phosphoribosyl-AMP. The polypeptide is Phosphoribosyl-AMP cyclohydrolase (Burkholderia cenocepacia (strain ATCC BAA-245 / DSM 16553 / LMG 16656 / NCTC 13227 / J2315 / CF5610) (Burkholderia cepacia (strain J2315))).